We begin with the raw amino-acid sequence, 360 residues long: UDP-3-O-acylglucosamine N-acyltransferase (360 aa).

Histidine 256 serves as the catalytic Proton acceptor. The segment at 341-360 is disordered; sequence EGSGAETAARPDDDRDEGRG. Residues 349–360 show a composition bias toward basic and acidic residues; sequence ARPDDDRDEGRG.

The protein belongs to the transferase hexapeptide repeat family. LpxD subfamily. In terms of assembly, homotrimer.

The enzyme catalyses a UDP-3-O-[(3R)-3-hydroxyacyl]-alpha-D-glucosamine + a (3R)-hydroxyacyl-[ACP] = a UDP-2-N,3-O-bis[(3R)-3-hydroxyacyl]-alpha-D-glucosamine + holo-[ACP] + H(+). It participates in bacterial outer membrane biogenesis; LPS lipid A biosynthesis. Catalyzes the N-acylation of UDP-3-O-acylglucosamine using 3-hydroxyacyl-ACP as the acyl donor. Is involved in the biosynthesis of lipid A, a phosphorylated glycolipid that anchors the lipopolysaccharide to the outer membrane of the cell. The chain is UDP-3-O-acylglucosamine N-acyltransferase from Rhodopseudomonas palustris (strain TIE-1).